We begin with the raw amino-acid sequence, 34 residues long: Hemopexin (34 aa).

Residues 1-25 (RPLTQHKPHTPGDEHPHGAEPPGXD) are disordered.

It belongs to the hemopexin family. In terms of tissue distribution, expressed by the liver and secreted in plasma.

The protein localises to the secreted. Its function is as follows. Binds heme and transports it to the liver for breakdown and iron recovery, after which the free hemopexin returns to the circulation. This Gallus gallus (Chicken) protein is Hemopexin (HPX).